Consider the following 589-residue polypeptide: Aspartate--tRNA(Asp/Asn) ligase (589 aa).

Position 176 (E176) interacts with L-aspartate. An aspartate region spans residues 200-203 (QLFK). R222 is a binding site for L-aspartate. ATP is bound by residues 222–224 (RDE) and Q231. H450 contacts L-aspartate. E484 lines the ATP pocket. L-aspartate is bound at residue R491. Position 536–539 (536–539 (GLDR)) interacts with ATP.

Belongs to the class-II aminoacyl-tRNA synthetase family. Type 1 subfamily. In terms of assembly, homodimer.

The protein resides in the cytoplasm. The enzyme catalyses tRNA(Asx) + L-aspartate + ATP = L-aspartyl-tRNA(Asx) + AMP + diphosphate. Aspartyl-tRNA synthetase with relaxed tRNA specificity since it is able to aspartylate not only its cognate tRNA(Asp) but also tRNA(Asn). Reaction proceeds in two steps: L-aspartate is first activated by ATP to form Asp-AMP and then transferred to the acceptor end of tRNA(Asp/Asn). This is Aspartate--tRNA(Asp/Asn) ligase from Bacillus cytotoxicus (strain DSM 22905 / CIP 110041 / 391-98 / NVH 391-98).